The chain runs to 1207 residues: Dermatan-sulfate epimerase-like protein (1207 aa).

The first 22 residues, 1 to 22, serve as a signal peptide directing secretion; that stretch reads MAFMFTEHLLFLTLMMCSFSTC. N-linked (GlcNAc...) asparagine glycosylation is found at N28, N661, N683, and N704. The next 2 helical transmembrane spans lie at 761 to 781 and 798 to 818; these read FPFG…SLVI and CVLI…WSTC. N869 carries N-linked (GlcNAc...) asparagine glycosylation.

Belongs to the dermatan-sulfate isomerase family.

It is found in the membrane. In Mus musculus (Mouse), this protein is Dermatan-sulfate epimerase-like protein (Dsel).